A 332-amino-acid chain; its full sequence is Malate dehydrogenase (332 aa).

15–21 contacts NAD(+); it reads GAAGHIG. Arg-96 and Arg-102 together coordinate substrate. NAD(+) is bound by residues Asn-109 and 133–135; that span reads VGN. Residues Asn-135 and Arg-166 each coordinate substrate. The active-site Proton acceptor is His-191.

It belongs to the LDH/MDH superfamily. MDH type 2 family.

The catalysed reaction is (S)-malate + NAD(+) = oxaloacetate + NADH + H(+). Its function is as follows. Catalyzes the reversible oxidation of malate to oxaloacetate. The sequence is that of Malate dehydrogenase from Mycolicibacterium vanbaalenii (strain DSM 7251 / JCM 13017 / BCRC 16820 / KCTC 9966 / NRRL B-24157 / PYR-1) (Mycobacterium vanbaalenii).